The sequence spans 152 residues: Transcriptional regulator MraZ (152 aa).

2 SpoVT-AbrB domains span residues 5–52 and 81–124; these read ATMV…PLPE and ASEC…DEQT.

It belongs to the MraZ family. Forms oligomers.

The protein localises to the cytoplasm. It localises to the nucleoid. Functionally, negatively regulates its own expression and that of the subsequent genes in the proximal part of the division and cell wall (dcw) gene cluster. Acts by binding directly to DNA. May also regulate the expression of genes outside the dcw cluster. In Yersinia pseudotuberculosis serotype O:1b (strain IP 31758), this protein is Transcriptional regulator MraZ.